The chain runs to 603 residues: Elongation factor 4 (603 aa).

In terms of domain architecture, tr-type G spans Ser7–Gln189. GTP is bound by residues Asp19–Thr24 and Asn136–Asp139.

Belongs to the TRAFAC class translation factor GTPase superfamily. Classic translation factor GTPase family. LepA subfamily.

The protein resides in the cell inner membrane. The catalysed reaction is GTP + H2O = GDP + phosphate + H(+). Functionally, required for accurate and efficient protein synthesis under certain stress conditions. May act as a fidelity factor of the translation reaction, by catalyzing a one-codon backward translocation of tRNAs on improperly translocated ribosomes. Back-translocation proceeds from a post-translocation (POST) complex to a pre-translocation (PRE) complex, thus giving elongation factor G a second chance to translocate the tRNAs correctly. Binds to ribosomes in a GTP-dependent manner. The sequence is that of Elongation factor 4 from Microcystis aeruginosa (strain NIES-843 / IAM M-2473).